Reading from the N-terminus, the 98-residue chain is Large ribosomal subunit protein uL23 (98 aa).

This sequence belongs to the universal ribosomal protein uL23 family. As to quaternary structure, part of the 50S ribosomal subunit. Contacts protein L29, and trigger factor when it is bound to the ribosome.

Its function is as follows. One of the early assembly proteins it binds 23S rRNA. One of the proteins that surrounds the polypeptide exit tunnel on the outside of the ribosome. Forms the main docking site for trigger factor binding to the ribosome. In Sorangium cellulosum (strain So ce56) (Polyangium cellulosum (strain So ce56)), this protein is Large ribosomal subunit protein uL23.